The primary structure comprises 301 residues: Probable alpha-L-glutamate ligase (301 aa).

Residues 104 to 287 (LQFLSRKGID…IAGMIIEFIE (184 aa)) enclose the ATP-grasp domain. ATP contacts are provided by residues lysine 141, 178–179 (EF), aspartate 187, and 211–213 (RSN). Mg(2+) is bound by residues aspartate 248, glutamate 260, and asparagine 262. Residues aspartate 248, glutamate 260, and asparagine 262 each coordinate Mn(2+).

The protein belongs to the RimK family. It depends on Mg(2+) as a cofactor. Requires Mn(2+) as cofactor.

This Coxiella burnetii (strain CbuK_Q154) (Coxiella burnetii (strain Q154)) protein is Probable alpha-L-glutamate ligase.